Reading from the N-terminus, the 215-residue chain is uncharacterized protein (215 aa).

Transmembrane regions (helical) follow at residues Ile-21–Asn-40, Leu-50–Phe-69, Phe-95–Phe-117, Leu-122–Leu-144, Ala-156–Leu-178, and Leu-183–Ser-205.

Belongs to the CcmB/CycW/HelB family.

The protein localises to the cell membrane. This is an uncharacterized protein from Rickettsia conorii (strain ATCC VR-613 / Malish 7).